The chain runs to 138 residues: Basic phospholipase A2 homolog bothropstoxin-II (138 aa).

Positions 1-16 (MRTLWIMAVLLVGVEG) are cleaved as a signal peptide. 7 disulfide bridges follow: Cys42/Cys131, Cys44/Cys60, Cys59/Cys111, Cys65/Cys138, Cys66/Cys104, Cys73/Cys97, and Cys91/Cys102. Residues 121 to 133 (KRYMAYPDVLCKK) are important for membrane-damaging activities in eukaryotes and bacteria; heparin-binding.

It belongs to the phospholipase A2 family. Group II subfamily. D49 sub-subfamily. In terms of assembly, homodimer; non-covalently linked (probable alternative/compact dimer conformation). In terms of tissue distribution, expressed by the venom gland.

It is found in the secreted. In terms of biological role, snake venom phospholipase A2 (PLA2) that shows low enzymatic activity even tough it conserves the catalytic residues. Shows a strong myotoxic activity and induces indirect hemolysis, anticoagulant properties, and cytotoxic activities. In vivo, it induces muscle necrosis, accompanied by polymorphonuclear cell infiltration, and edema in the mouse paw. It exerts its function even in the absence of extracellular calcium, indicating it is not a calcium-dependent enzyme. A model of myotoxic mechanism has been proposed: an apo Lys49-PLA2 is activated by the entrance of a hydrophobic molecule (e.g. fatty acid) at the hydrophobic channel of the protein leading to a reorientation of a monomer. This reorientation causes a transition between 'inactive' to 'active' states, causing alignment of C-terminal and membrane-docking sites (MDoS) side-by-side and putting the membrane-disruption sites (MDiS) in the same plane, exposed to solvent and in a symmetric position for both monomers. The MDoS region stabilizes the toxin on membrane by the interaction of charged residues with phospholipid head groups. Subsequently, the MDiS region destabilizes the membrane with penetration of hydrophobic residues. This insertion causes a disorganization of the membrane, allowing an uncontrolled influx of ions (i.e. calcium and sodium), and eventually triggering irreversible intracellular alterations and cell death. The chain is Basic phospholipase A2 homolog bothropstoxin-II from Bothrops jararacussu (Jararacussu).